The following is a 202-amino-acid chain: MSRYRGPRLRITRRLGDLPGLTRKAAKRSHPPGQHGQARRKRSEYAIRLEEKQKLRFNYGISERQLVRYVKKARAQEGSTGTNLLKLLENRLDNVCFRLGFGPTIPGSRQLVNHGHVTVNGRITDIASYQCKAGDVIAIRDNKASKQLAQANLEFPGLANVPPHLELDKTKLSAKISAKTDREWVAIEINELLVVEYYSRKV.

The span at 1–13 (MSRYRGPRLRITR) shows a compositional bias: basic residues. The interval 1-43 (MSRYRGPRLRITRRLGDLPGLTRKAAKRSHPPGQHGQARRKRS) is disordered. Positions 90-152 (NRLDNVCFRL…KASKQLAQAN (63 aa)) constitute an S4 RNA-binding domain.

The protein belongs to the universal ribosomal protein uS4 family. In terms of assembly, part of the 30S ribosomal subunit. Contacts protein S5. The interaction surface between S4 and S5 is involved in control of translational fidelity.

In terms of biological role, one of the primary rRNA binding proteins, it binds directly to 16S rRNA where it nucleates assembly of the body of the 30S subunit. Its function is as follows. With S5 and S12 plays an important role in translational accuracy. This Prochlorococcus marinus (strain NATL2A) protein is Small ribosomal subunit protein uS4.